A 341-amino-acid polypeptide reads, in one-letter code: L-threonine 3-dehydrogenase (341 aa).

C38 is a Zn(2+) binding site. Residues T40 and H43 each act as charge relay system in the active site. H63, E64, C93, C96, C99, and C107 together coordinate Zn(2+). Residues I175, D195, R200, 262–264 (LGI), and 286–287 (IY) contribute to the NAD(+) site.

The protein belongs to the zinc-containing alcohol dehydrogenase family. In terms of assembly, homotetramer. Zn(2+) is required as a cofactor.

It localises to the cytoplasm. The enzyme catalyses L-threonine + NAD(+) = (2S)-2-amino-3-oxobutanoate + NADH + H(+). It participates in amino-acid degradation; L-threonine degradation via oxydo-reductase pathway; glycine from L-threonine: step 1/2. Its function is as follows. Catalyzes the NAD(+)-dependent oxidation of L-threonine to 2-amino-3-ketobutyrate. The protein is L-threonine 3-dehydrogenase of Shewanella sp. (strain W3-18-1).